Here is a 315-residue protein sequence, read N- to C-terminus: Adenine deaminase (315 aa).

3 residues coordinate Zn(2+): histidine 14, histidine 16, and histidine 194. Catalysis depends on glutamate 197, which acts as the Proton donor. Position 275 (aspartate 275) interacts with Zn(2+). Aspartate 276 is a binding site for substrate.

Belongs to the metallo-dependent hydrolases superfamily. Adenosine and AMP deaminases family. Adenine deaminase type 2 subfamily. Requires Zn(2+) as cofactor.

The enzyme catalyses adenine + H2O + H(+) = hypoxanthine + NH4(+). Catalyzes the hydrolytic deamination of adenine to hypoxanthine. Plays an important role in the purine salvage pathway and in nitrogen catabolism. This is Adenine deaminase from Ectopseudomonas mendocina (strain ymp) (Pseudomonas mendocina).